Reading from the N-terminus, the 103-residue chain is Large ribosomal subunit protein bL21 (103 aa).

Belongs to the bacterial ribosomal protein bL21 family. In terms of assembly, part of the 50S ribosomal subunit. Contacts protein L20.

Functionally, this protein binds to 23S rRNA in the presence of protein L20. The protein is Large ribosomal subunit protein bL21 of Haemophilus influenzae (strain PittEE).